A 450-amino-acid polypeptide reads, in one-letter code: Glucose-6-phosphate isomerase (450 aa).

The active-site Proton donor is the glutamate 291. Catalysis depends on residues histidine 312 and lysine 426.

The protein belongs to the GPI family.

The protein resides in the cytoplasm. It catalyses the reaction alpha-D-glucose 6-phosphate = beta-D-fructose 6-phosphate. It functions in the pathway carbohydrate biosynthesis; gluconeogenesis. The protein operates within carbohydrate degradation; glycolysis; D-glyceraldehyde 3-phosphate and glycerone phosphate from D-glucose: step 2/4. In terms of biological role, catalyzes the reversible isomerization of glucose-6-phosphate to fructose-6-phosphate. The chain is Glucose-6-phosphate isomerase from Clostridium botulinum (strain Hall / ATCC 3502 / NCTC 13319 / Type A).